A 182-amino-acid chain; its full sequence is ATP-dependent protease subunit HslV (182 aa).

Threonine 12 is an active-site residue. Na(+)-binding residues include alanine 167, cysteine 170, and threonine 173.

This sequence belongs to the peptidase T1B family. HslV subfamily. A double ring-shaped homohexamer of HslV is capped on each side by a ring-shaped HslU homohexamer. The assembly of the HslU/HslV complex is dependent on binding of ATP.

It is found in the cytoplasm. The enzyme catalyses ATP-dependent cleavage of peptide bonds with broad specificity.. With respect to regulation, allosterically activated by HslU binding. Its function is as follows. Protease subunit of a proteasome-like degradation complex believed to be a general protein degrading machinery. This Prosthecochloris aestuarii (strain DSM 271 / SK 413) protein is ATP-dependent protease subunit HslV.